The following is a 359-amino-acid chain: MNAMDNMTADYSPDYFDDAVNSSMCEYDEWEPSYSLIPVLYMLIFILGLTGNGVVIFTVWRAQSKRRAADVYIGNLALADLTFVVTLPLWAVYTALGYHWPFGVALCKISSYVVLLNMYASVFCLTCLSLDRYMAIVHSLTSTQLRTRGHMRASLTAIWLLSGVLAAPTLLFRTTVYDVETNRTSCAMDFNLVVSQPGQETYWIAGLSISSTALGFLIPLLAMMVCYGFIGCTVTRHFNSLRKEDQRKRRLLKIITTLVVVFAACWMPFHVVKTMDALSYLNLAPDSCTFLNLLLLAHPYATCLAYVNSCLNPLLYAFFDLRFRSQCLCLLNLKKALHASPASSLSSQKTEAQSLATKV.

Residues 1–36 are Extracellular-facing; sequence MNAMDNMTADYSPDYFDDAVNSSMCEYDEWEPSYSL. Asn6 and Asn21 each carry an N-linked (GlcNAc...) asparagine glycan. 2 disulfide bridges follow: Cys25–Cys288 and Cys107–Cys186. A helical membrane pass occupies residues 37-57; it reads IPVLYMLIFILGLTGNGVVIF. At 58-75 the chain is on the cytoplasmic side; it reads TVWRAQSKRRAADVYIGN. A helical transmembrane segment spans residues 76–96; it reads LALADLTFVVTLPLWAVYTAL. Residues 97 to 108 lie on the Extracellular side of the membrane; the sequence is GYHWPFGVALCK. A helical membrane pass occupies residues 109-129; the sequence is ISSYVVLLNMYASVFCLTCLS. The Cytoplasmic portion of the chain corresponds to 130 to 151; it reads LDRYMAIVHSLTSTQLRTRGHM. The chain crosses the membrane as a helical span at residues 152–172; it reads RASLTAIWLLSGVLAAPTLLF. The Extracellular segment spans residues 173–213; the sequence is RTTVYDVETNRTSCAMDFNLVVSQPGQETYWIAGLSISSTA. N-linked (GlcNAc...) asparagine glycosylation is present at Asn182. A helical membrane pass occupies residues 214 to 234; it reads LGFLIPLLAMMVCYGFIGCTV. Topologically, residues 235-251 are cytoplasmic; that stretch reads TRHFNSLRKEDQRKRRL. Residues 252 to 272 traverse the membrane as a helical segment; the sequence is LKIITTLVVVFAACWMPFHVV. Topologically, residues 273 to 286 are extracellular; that stretch reads KTMDALSYLNLAPD. The chain crosses the membrane as a helical span at residues 287–307; that stretch reads SCTFLNLLLLAHPYATCLAYV. Residues 308 to 359 lie on the Cytoplasmic side of the membrane; sequence NSCLNPLLYAFFDLRFRSQCLCLLNLKKALHASPASSLSSQKTEAQSLATKV.

It belongs to the G-protein coupled receptor 1 family. In terms of tissue distribution, mesendodermal expression at the blastoderm margin appears by 4.5 hpf. At early gastrulation, expression is maintained ventrolaterally while expression in dorsal cells and random deep cells declines. During gastrulation and segmentation, expression is maintained in adaxial, intermediate, and lateral plate mesoderm. During late segmentation, expressed in several regions including the forming heart. By 24 hpf, expressed in the dorsal aorta, caudal vein, and intersomitic blood vessels.

The protein localises to the cell membrane. Its function is as follows. G protein-coupled receptor for peptide hormones apelin (apln) and apelin receptor early endogenous ligand (apela), that plays a role in the regulation of normal cardiovascular function and fluid homeostasis. When acting as apelin receptor, activates both G(i) protein pathway that inhibits adenylate cyclase activity, and the beta-arrestin pathway that promotes internalization of the receptor. Also functions as mechanoreceptor that is activated by pathological stimuli in a G-protein-independent fashion to induce beta-arrestin signaling, hence eliciting cardiac hypertrophy. However, the presence of apelin ligand blunts cardiac hypertrophic induction from APLNR/APJ on response to pathological stimuli. Plays a key role in early development such as gastrulation, blood vessels formation and heart morphogenesis by acting as a receptor for apela hormone, promoting endoderm and mesendoderm cell migration and regulating the migration of cells fated to become myocardial progenitors, respectively. Positively regulates angioblast migration toward the embryonic midline, i.e. the position of the future vessel formation, during vasculogenesis. May promote sinus venosus (SV)-derived endothelial cells migration into the developing heart to promote coronary blood vessel development. Required for cardiovascular development, particularly for intersomitic vein angiogenesis by acting as a receptor for apln hormone. Plays a role in various processes in adults such as regulation of blood vessel formation, blood pressure, heart contractility and heart failure. Acts redundantly with agtrl1a in heart development. In terms of biological role, g protein-coupled receptor for peptide hormones apelin (APLN) and apelin receptor early endogenous ligand (APELA/ELA), that plays a role in the regulation of normal cardiovascular function and fluid homeostasis. When acting as apelin receptor, activates both G(i) protein pathway that inhibits adenylate cyclase activity, and the beta-arrestin pathway that promotes internalization of the receptor. APLNR/APJ also functions as mechanoreceptor that is activated by pathological stimuli in a G-protein-independent fashion to induce beta-arrestin signaling, hence eliciting cardiac hypertrophy. Plays a key role in early development such as gastrulation, blood vessels formation and heart morphogenesis by acting as a APELA receptor. May promote angioblast migration toward the embryonic midline, i.e. the position of the future vessel formation, during vasculogenesis. Promotes sinus venosus (SV)-derived endothelial cells migration into the developing heart to promote coronary blood vessel development. Also plays a role in various processes in adults such as regulation of blood vessel formation, blood pressure, heart contractility and heart failure. The protein is Apelin receptor B (aplnrb) of Danio rerio (Zebrafish).